The primary structure comprises 287 residues: Protease HtpX (287 aa).

Transmembrane regions (helical) follow at residues 4–24 (VLLF…VFNI) and 37–57 (VGLL…SLWI). Position 143 (His-143) interacts with Zn(2+). The active site involves Glu-144. His-147 contacts Zn(2+). Transmembrane regions (helical) follow at residues 158–178 (LIQG…ASAI) and 194–214 (GVVM…VMWF). Position 219 (Glu-219) interacts with Zn(2+).

This sequence belongs to the peptidase M48B family. The cofactor is Zn(2+).

It localises to the cell inner membrane. The polypeptide is Protease HtpX (Idiomarina loihiensis (strain ATCC BAA-735 / DSM 15497 / L2-TR)).